Consider the following 231-residue polypeptide: Large ribosomal subunit protein uL1 (231 aa).

Belongs to the universal ribosomal protein uL1 family. In terms of assembly, part of the 50S ribosomal subunit.

Binds directly to 23S rRNA. The L1 stalk is quite mobile in the ribosome, and is involved in E site tRNA release. Functionally, protein L1 is also a translational repressor protein, it controls the translation of the L11 operon by binding to its mRNA. The protein is Large ribosomal subunit protein uL1 of Janthinobacterium sp. (strain Marseille) (Minibacterium massiliensis).